Here is a 328-residue protein sequence, read N- to C-terminus: Fructose-1,6-bisphosphatase class 1 (328 aa).

The Mg(2+) site is built by glutamate 91, aspartate 110, leucine 112, and aspartate 113. Substrate-binding positions include 113–116, asparagine 205, and 257–259; these read DGSS and YLY. Glutamate 277 serves as a coordination point for Mg(2+).

This sequence belongs to the FBPase class 1 family. Homotetramer. Requires Mg(2+) as cofactor.

It localises to the cytoplasm. The catalysed reaction is beta-D-fructose 1,6-bisphosphate + H2O = beta-D-fructose 6-phosphate + phosphate. It participates in carbohydrate biosynthesis; gluconeogenesis. The chain is Fructose-1,6-bisphosphatase class 1 from Azorhizobium caulinodans (strain ATCC 43989 / DSM 5975 / JCM 20966 / LMG 6465 / NBRC 14845 / NCIMB 13405 / ORS 571).